A 523-amino-acid chain; its full sequence is WD repeat-containing protein WDS homolog (523 aa).

Residues 16–48 (KKHEFIRILVQCLYSLGFKNSASCLEFESKILY) enclose the LisH domain. In terms of domain architecture, CTLH spans 49–107 (KTADSEFLEKQVLSGNWDSCVQVLDRIFDNSMDDTRNTALYLVFKQCLLEYLKRGDVSL). WD repeat units follow at residues 222-261 (AHKN…KVEL), 267-306 (SHQN…LRHT), 310-353 (NNTG…KAWR), 355-394 (TRIP…ERVI), 395-434 (SEEQ…KQPL), 438-480 (GHRQ…PLEV), and 483-523 (GHSM…KPLN).

Interacts with RANBPM.

The protein localises to the cytoplasm. This chain is WD repeat-containing protein WDS homolog, found in Arabidopsis thaliana (Mouse-ear cress).